Consider the following 443-residue polypeptide: Xaa-Pro dipeptidase (443 aa).

Residues aspartate 244, aspartate 255, histidine 336, glutamate 381, and glutamate 420 each contribute to the Mn(2+) site.

It belongs to the peptidase M24B family. Bacterial-type prolidase subfamily. The cofactor is Mn(2+).

The enzyme catalyses Xaa-L-Pro dipeptide + H2O = an L-alpha-amino acid + L-proline. Its function is as follows. Splits dipeptides with a prolyl residue in the C-terminal position. The sequence is that of Xaa-Pro dipeptidase from Stenotrophomonas maltophilia (strain K279a).